A 565-amino-acid polypeptide reads, in one-letter code: CTP synthase (565 aa).

Residues 1–272 (MARPKNVKHI…DLRVMKKLGL (272 aa)) form an amidoligase domain region. Ser18 is a binding site for CTP. Ser18 contacts UTP. An ATP-binding site is contributed by 19–24 (SLGKGI). Tyr59 serves as a coordination point for L-glutamine. Asp76 contributes to the ATP binding site. Asp76 and Glu146 together coordinate Mg(2+). CTP-binding positions include 153–155 (DIE), 193–198 (KTKPTQ), and Lys229. UTP-binding positions include 193 to 198 (KTKPTQ) and Lys229. One can recognise a Glutamine amidotransferase type-1 domain in the interval 299-543 (TIGICGKYTE…VHAAKEFAQG (245 aa)). Gly363 provides a ligand contact to L-glutamine. Catalysis depends on Cys390, which acts as the Nucleophile; for glutamine hydrolysis. L-glutamine is bound by residues 391-394 (LGMQ), Glu414, and Arg471. Catalysis depends on residues His516 and Glu518.

Belongs to the CTP synthase family. Homotetramer.

The catalysed reaction is UTP + L-glutamine + ATP + H2O = CTP + L-glutamate + ADP + phosphate + 2 H(+). It catalyses the reaction L-glutamine + H2O = L-glutamate + NH4(+). It carries out the reaction UTP + NH4(+) + ATP = CTP + ADP + phosphate + 2 H(+). It functions in the pathway pyrimidine metabolism; CTP biosynthesis via de novo pathway; CTP from UDP: step 2/2. Its activity is regulated as follows. Allosterically activated by GTP, when glutamine is the substrate; GTP has no effect on the reaction when ammonia is the substrate. The allosteric effector GTP functions by stabilizing the protein conformation that binds the tetrahedral intermediate(s) formed during glutamine hydrolysis. Inhibited by the product CTP, via allosteric rather than competitive inhibition. Catalyzes the ATP-dependent amination of UTP to CTP with either L-glutamine or ammonia as the source of nitrogen. Regulates intracellular CTP levels through interactions with the four ribonucleotide triphosphates. This Chlorobaculum tepidum (strain ATCC 49652 / DSM 12025 / NBRC 103806 / TLS) (Chlorobium tepidum) protein is CTP synthase.